The following is a 504-amino-acid chain: Prenylcysteine oxidase 1 (504 aa).

A signal peptide spans 1-28 (MGRFAATLVGSLFGLGLLLCGLGRLASA). Residues Asn196, Asn322, and Asn352 are each glycosylated (N-linked (GlcNAc...) asparagine).

It belongs to the prenylcysteine oxidase family. FAD is required as a cofactor. Expressed mainly in cerebrum.

It is found in the lysosome. It catalyses the reaction an S-polyprenyl-L-cysteine + O2 + H2O = a polyprenal + L-cysteine + H2O2. The enzyme catalyses S-(2E,6E)-farnesyl-L-cysteine + O2 + H2O = (2E,6E)-farnesal + L-cysteine + H2O2. It carries out the reaction [(2E,6E,10E)-geranylgeranyl]-L-cysteine + O2 + H2O = (2E,6E,10E)-geranylgeranial + L-cysteine + H2O2. Prenylcysteine oxidase that cleaves the thioether bond of prenyl-L-cysteines, such as farnesylcysteine and geranylgeranylcysteine. Only active against free prenylcysteines and not prenylcysteine residues within prenylated proteins or peptides. Involved in the final step in the degradation of prenylated proteins, by degrading prenylcysteines after the protein has been degraded. In Rattus norvegicus (Rat), this protein is Prenylcysteine oxidase 1.